The chain runs to 713 residues: Major surface-labeled trophozoite antigen 417 (713 aa).

The first 17 residues, 1–17, serve as a signal peptide directing secretion; it reads MFGRFLLAIVILQLART. Residues 18–679 are Extracellular-facing; that stretch reads ACTQEADDGK…KDSGSTNKSG (662 aa). Residues Asn289 and Asn676 are each glycosylated (N-linked (GlcNAc...) asparagine). A helical membrane pass occupies residues 680–708; sequence LSTGAIAGISVAVIVVVGGLIGFLCWWFL. The Cytoplasmic segment spans residues 709–713; the sequence is CRGKA.

This sequence belongs to the Giardia variant surface protein family.

Its subcellular location is the cell membrane. The chain is Major surface-labeled trophozoite antigen 417 (TSA 417) from Giardia intestinalis (Giardia lamblia).